The sequence spans 150 residues: MKIIARNKKALFDYSIIERFEAGIVLKGSEVVALRAGRANLKDSFVRIIKNEIFLLNSHISLLHTTHSFYKHEERGARKLLMHRKQIDKLLGKVSIEGYTIVALDLYFNTKNKVKATLALAKGKNLHDKRETLKKKQADLEARAAMKNYK.

It belongs to the SmpB family.

Its subcellular location is the cytoplasm. Its function is as follows. Required for rescue of stalled ribosomes mediated by trans-translation. Binds to transfer-messenger RNA (tmRNA), required for stable association of tmRNA with ribosomes. tmRNA and SmpB together mimic tRNA shape, replacing the anticodon stem-loop with SmpB. tmRNA is encoded by the ssrA gene; the 2 termini fold to resemble tRNA(Ala) and it encodes a 'tag peptide', a short internal open reading frame. During trans-translation Ala-aminoacylated tmRNA acts like a tRNA, entering the A-site of stalled ribosomes, displacing the stalled mRNA. The ribosome then switches to translate the ORF on the tmRNA; the nascent peptide is terminated with the 'tag peptide' encoded by the tmRNA and targeted for degradation. The ribosome is freed to recommence translation, which seems to be the essential function of trans-translation. This is SsrA-binding protein from Campylobacter jejuni subsp. jejuni serotype O:6 (strain 81116 / NCTC 11828).